We begin with the raw amino-acid sequence, 446 residues long: N-succinylarginine dihydrolase (446 aa).

Substrate is bound by residues 19-28, Asn110, and 137-138; these read AGLSFGNVAS and HR. The active site involves Glu174. Arg213 serves as a coordination point for substrate. The active site involves His249. The substrate site is built by Asp251 and Asn364. The active-site Nucleophile is Cys370.

The protein belongs to the succinylarginine dihydrolase family. In terms of assembly, homodimer.

It carries out the reaction N(2)-succinyl-L-arginine + 2 H2O + 2 H(+) = N(2)-succinyl-L-ornithine + 2 NH4(+) + CO2. It functions in the pathway amino-acid degradation; L-arginine degradation via AST pathway; L-glutamate and succinate from L-arginine: step 2/5. Functionally, catalyzes the hydrolysis of N(2)-succinylarginine into N(2)-succinylornithine, ammonia and CO(2). The polypeptide is N-succinylarginine dihydrolase (Paraburkholderia xenovorans (strain LB400)).